The chain runs to 649 residues: PTS system mannitol-specific EIICBA component (649 aa).

The PTS EIIC type-2 domain occupies 13-342 (FGRFLSNMVM…LLMKAQTSTE (330 aa)). 6 helical membrane-spanning segments follow: residues 25 to 46 (IGAFIAWGFITALFIPTGWVPN), 51 to 71 (SLVGPMITYLLPLLIGYTGGK), 135 to 156 (SAGIIGMLCAIIAFFLIGPFVK), 166 to 186 (VNFLVTAHLLPLTSIFVEPAK), 274 to 293 (AIAGGMTGVFTLTVFNAGLV), and 314 to 335 (LGVVCSIFAAAAVSFTVAALLM). The PTS EIIB type-2 domain maps to 384–475 (QSIIVACDAG…LVTQLLAAKR (92 aa)). The Phosphocysteine intermediate; for EIIB activity role is filled by Cys-390. Position 390 is a phosphocysteine; by EIIA (Cys-390). The PTS EIIA type-2 domain maps to 504–646 (FQLQKENIHL…SDVLSILATS (143 aa)). His-564 (tele-phosphohistidine intermediate; for EIIA activity) is an active-site residue. His-564 is modified (phosphohistidine; by HPr).

In terms of assembly, homodimer. In terms of processing, an intramolecular phosphotransfer takes places between His-564 and Cys-390.

The protein resides in the cell inner membrane. The catalysed reaction is D-mannitol(out) + N(pros)-phospho-L-histidyl-[protein] = D-mannitol 1-phosphate(in) + L-histidyl-[protein]. Functionally, the phosphoenolpyruvate-dependent sugar phosphotransferase system (sugar PTS), a major carbohydrate active transport system, catalyzes the phosphorylation of incoming sugar substrates concomitantly with their translocation across the cell membrane. This system is involved in D-mannitol transport. The polypeptide is PTS system mannitol-specific EIICBA component (mtlA) (Vibrio cholerae serotype O1 (strain ATCC 39315 / El Tor Inaba N16961)).